The sequence spans 248 residues: Probable septum site-determining protein MinC (248 aa).

Residues 94–125 (GMPPAMRGGQPAADFEAPAGEPQANPGAPEPQ) form a disordered region.

The protein belongs to the MinC family. In terms of assembly, interacts with MinD and FtsZ.

Cell division inhibitor that blocks the formation of polar Z ring septums. Rapidly oscillates between the poles of the cell to destabilize FtsZ filaments that have formed before they mature into polar Z rings. Prevents FtsZ polymerization. This Brucella abortus (strain S19) protein is Probable septum site-determining protein MinC.